The following is a 546-amino-acid chain: MLSEVIARVELLIGEQTLSGGILTFLFIVVIAHFVLTRFTVHSRFWNSQAWTGVREEWFPKMRAKVRTIGNIRQMLSDGYEGFSKQNKAFALPVIAEKPWLVLPHSCIPELLAKSDSEIDMKIIHEEQLMHEYTTGSLGRHVVDVPIQYDILLRQVNRKLPLLISAFNEELDKSFCHYWGTDTSYSEVNLSETCEKIVTQALNRIFAGKEICRDEGFLEHSRLYSEGVGRNAIMVRMLPPLLRPLLAPFITYSNRKHRDICLRVCLPVIRERVQHTAAKRADAEHKWEPPLDVLQWIIEESFARNDPKELDPRMITQRLLALNFVAIDTTHMSMAHTILDLYRSPNSDDFLVGLREECERVLQANGGQWTKSGLDDLVCVDSTIRESMRYSDLGYISLTRMVVDPKGTQFNANGTNSSSPLSVPPGIRICVPAHAIHRDAALYPSPYEFQAFRFSKAREKYRGTQTELSEPKVSIVTTTDKFLPFGHGRHACPGRFFAAQQMKLMLAYLVQNYDVEKLSTKIQNKIMVGTTKPDASLKIKVKRRKV.

Residues T17 to T37 form a helical membrane-spanning segment. Residues N189, N413, and N416 are each glycosylated (N-linked (GlcNAc...) asparagine). C492 contacts heme.

It belongs to the cytochrome P450 family. The cofactor is heme.

Its subcellular location is the membrane. Its pathway is mycotoxin biosynthesis. Its function is as follows. Cytochrome P450 monooxygenase; part of the gene cluster that mediates the biosynthesis of pneumocandins, lipohexapeptides of the echinocandin family that prevent fungal cell wall formation by non-competitive inhibition of beta-1,3-glucan synthase. The 10,12-dimethylmyristoyl side chain is synthesized by the reducing polyketide synthase gloL/GLPKS4. The thioesterase gloN/GLHYD exclusively interacts with gloL/GLPKS4 to maintain turnover of the polyketide side chain. The 10R,12S-dimethylmyristic acid is then transferred to the first thiolation domain of the nonribosomal peptide synthetase gloA/GLNRPS4 by the acyl-AMP ligase gloD/GLligase, followed by its acylation to L-ornithine to trigger elongation of the cyclic hexapeptide. L-ornithine, 4R-hydroxyl-L-proline (generated from L-proline by the dioxygenase gloF/GLOXY2), 3S-hydroxyl-L-homotyrosine (generated by gloG/GLHtyB, gloH/GLHtyA, gloI/GLHtyC, gloJ/GLHtyD and hydroxylated at C-3 by the dioxygenase gloM/GLOXY1), 3R-hydroxyl-L-glutamine (generated from L-glutamine probably by the dioxygenase gloE/GLOXY3) and 3S-hydroxyl-L-proline (generated from L-proline by the dioxygenase gloF/GLOXY2 to yield pneumocandin B0), or 3S-hydroxyl-4S-methyl-L-proline (generated from L-leucine by the dioxygenase gloC/GLOXY4 to yield pneumocandin A0) are sequentially added to the growing chain. The last C domain of gloA/GLNRPS4 is proposed to be responsible for cyclization by condensation to form the peptide bond between L-ornithine and 3S-hydroxyl-4S-methyl-L-proline (for pneumocandin A0) or 3S-hydroxyl-L-proline (for pneumocandin B0). Finally, the subsequent C-4 hydroxylation of 3S-hydroxyl-L-homotyrosine and L-ornithine dihydroxylation at C-4 and C-5 are performed by the cytochrome P450 monooxygenases gloP/GLP450-1 and gloO/GLP450-2, respectively. The polypeptide is Cytochrome P450 monooxygenase gloP (Glarea lozoyensis (strain ATCC 20868 / MF5171)).